The sequence spans 338 residues: Uroporphyrinogen decarboxylase (338 aa).

Substrate-binding positions include Arg25–Arg29, Phe44, Asp75, Tyr146, Ser201, and His314.

Belongs to the uroporphyrinogen decarboxylase family. As to quaternary structure, homodimer.

The protein resides in the cytoplasm. It catalyses the reaction uroporphyrinogen III + 4 H(+) = coproporphyrinogen III + 4 CO2. It participates in porphyrin-containing compound metabolism; protoporphyrin-IX biosynthesis; coproporphyrinogen-III from 5-aminolevulinate: step 4/4. Functionally, catalyzes the decarboxylation of four acetate groups of uroporphyrinogen-III to yield coproporphyrinogen-III. The chain is Uroporphyrinogen decarboxylase from Aquifex aeolicus (strain VF5).